A 314-amino-acid polypeptide reads, in one-letter code: Ribosomal RNA small subunit methyltransferase H (314 aa).

S-adenosyl-L-methionine is bound by residues 34–36 (GGH), Asp-53, Phe-82, Asp-103, and Gln-110.

It belongs to the methyltransferase superfamily. RsmH family.

It localises to the cytoplasm. The catalysed reaction is cytidine(1402) in 16S rRNA + S-adenosyl-L-methionine = N(4)-methylcytidine(1402) in 16S rRNA + S-adenosyl-L-homocysteine + H(+). Its function is as follows. Specifically methylates the N4 position of cytidine in position 1402 (C1402) of 16S rRNA. The chain is Ribosomal RNA small subunit methyltransferase H from Levilactobacillus brevis (strain ATCC 367 / BCRC 12310 / CIP 105137 / JCM 1170 / LMG 11437 / NCIMB 947 / NCTC 947) (Lactobacillus brevis).